A 453-amino-acid polypeptide reads, in one-letter code: MEIKGKKILVVGLARTGVAVARFLASRGAKVTVTDMKEESELADYLLQLEDLDLNLELGRHDKHTFLMSDLIVVSPGVPMDISPLLMAKAQRRVVISEIELAAAFIKAPMVAITGTNGKTTTTTLAGEIFKACGVETFVGGNIGNPLIELVTSGNDVAQVVVELSSFQLEGIQRFRPKVAVLLNITEDHLDRYASYQDYIDAKLRIFENQTVDDFAVLNVDDPLVAACAATVKSRVFPFSQRKELAEGIFCSKGIIVYRWQGSELRFDTAAFKLKGVHNIENIMAALASTLLSGADPIKAGRAVESFKGLRHRMEFIREVGGVAYYEDSKGTNVGSVVKSLESFDKGITLIAGGKDKGGSYAPLADLVRERVKHLILIGEAKERIEAELGNLTDTHKAATLEDAVAIAHRLAKAGEVVLFSPACSSFDMFKDYAERAERFNAAVRALAGGDCR.

ATP is bound at residue 115 to 121 (GTNGKTT).

It belongs to the MurCDEF family.

The protein resides in the cytoplasm. It carries out the reaction UDP-N-acetyl-alpha-D-muramoyl-L-alanine + D-glutamate + ATP = UDP-N-acetyl-alpha-D-muramoyl-L-alanyl-D-glutamate + ADP + phosphate + H(+). It functions in the pathway cell wall biogenesis; peptidoglycan biosynthesis. Cell wall formation. Catalyzes the addition of glutamate to the nucleotide precursor UDP-N-acetylmuramoyl-L-alanine (UMA). The polypeptide is UDP-N-acetylmuramoylalanine--D-glutamate ligase (Geotalea daltonii (strain DSM 22248 / JCM 15807 / FRC-32) (Geobacter daltonii)).